The primary structure comprises 253 residues: Probable transcriptional regulatory protein RC0681 (253 aa).

The segment at 1–21 (MAGHSKFKNIQHRKGAQDKKR) is disordered.

The protein belongs to the TACO1 family.

It localises to the cytoplasm. The polypeptide is Probable transcriptional regulatory protein RC0681 (Rickettsia conorii (strain ATCC VR-613 / Malish 7)).